The chain runs to 290 residues: MRIADYSVTKAVLERHGFTFKKSFGQNFLTDTNILQKIVDTAEIDDQVNVIEIGPGIGALTEFLAERAAQVMAFEIDHRLMPILADTLRDFDNVTVVNEDILKVDLAQHIQNFKNPNLPIKVVANLPYYITTPILMHLIESGIPFCEFVVMMQKEVADRISAQPNTKAYGSLSIAVQYYMTAKVAFIVPRTVFVPAPNVDSAILKMVRRPEPAVAVEDENFFFKVSKASFTHRRKTLWNNLTGYFGKTEEVKDKLTKALDQAGLSPSVRGEALSLAEFAGLADALKGQGL.

S-adenosyl-L-methionine contacts are provided by asparagine 27, leucine 29, glycine 54, glutamate 75, aspartate 100, and asparagine 125.

The protein belongs to the class I-like SAM-binding methyltransferase superfamily. rRNA adenine N(6)-methyltransferase family. RsmA subfamily.

The protein localises to the cytoplasm. The enzyme catalyses adenosine(1518)/adenosine(1519) in 16S rRNA + 4 S-adenosyl-L-methionine = N(6)-dimethyladenosine(1518)/N(6)-dimethyladenosine(1519) in 16S rRNA + 4 S-adenosyl-L-homocysteine + 4 H(+). Functionally, specifically dimethylates two adjacent adenosines (A1518 and A1519) in the loop of a conserved hairpin near the 3'-end of 16S rRNA in the 30S particle. May play a critical role in biogenesis of 30S subunits. The protein is Ribosomal RNA small subunit methyltransferase A of Streptococcus pneumoniae (strain JJA).